A 493-amino-acid chain; its full sequence is Glutamate--tRNA ligase (493 aa).

The short motif at 10–20 (PSPTGDPHVGT) is the 'HIGH' region element. The 'KMSKS' region motif lies at 251 to 255 (KLSKR). Lys-254 is a binding site for ATP.

This sequence belongs to the class-I aminoacyl-tRNA synthetase family. Glutamate--tRNA ligase type 1 subfamily. As to quaternary structure, monomer.

It is found in the cytoplasm. The catalysed reaction is tRNA(Glu) + L-glutamate + ATP = L-glutamyl-tRNA(Glu) + AMP + diphosphate. Its function is as follows. Catalyzes the attachment of glutamate to tRNA(Glu) in a two-step reaction: glutamate is first activated by ATP to form Glu-AMP and then transferred to the acceptor end of tRNA(Glu). In Pseudomonas putida (strain ATCC 700007 / DSM 6899 / JCM 31910 / BCRC 17059 / LMG 24140 / F1), this protein is Glutamate--tRNA ligase.